A 183-amino-acid chain; its full sequence is Cell division protein SepF (183 aa).

The interval 13-58 (MHDDDDFDDDYEDYDDDFDEDYEDDKPSARKRLFTGSSKKDSVADE) is disordered. The segment covering 16-36 (DDDFDDDYEDYDDDFDEDYED) has biased composition (acidic residues).

It belongs to the SepF family. In terms of assembly, homodimer. Interacts with FtsZ.

It is found in the cytoplasm. In terms of biological role, cell division protein that is part of the divisome complex and is recruited early to the Z-ring. Probably stimulates Z-ring formation, perhaps through the cross-linking of FtsZ protofilaments. Its function overlaps with FtsA. This is Cell division protein SepF from Lachnospira eligens (strain ATCC 27750 / DSM 3376 / VPI C15-48 / C15-B4) (Eubacterium eligens).